The sequence spans 30 residues: Snaclec carinactivase-1 regulatory subunit 14 kDa chain (30 aa).

In terms of domain architecture, C-type lectin spans 1–30 (DCLPDWFHYEGHCYRVFDEPKKWADAEKFC). Residues cysteine 2 and cysteine 13 are joined by a disulfide bond.

This sequence belongs to the snaclec family. Heterodimer of a metalloproteinase subunit and a regulatory subunit comprising two polypeptides disulfide-linked (14 kDa and 17 kDa chains). Expressed by the venom gland.

It is found in the secreted. Functionally, calcium-dependent prothrombin activator. This protein may activate prothrombin via recognition by the regulatory subunit of the calcium ion bound conformation of its gamma-carboxyglutamic acid (GLA) domain, and the subsequent conversion of prothrombin to active thrombin is catalyzed by the catalytic subunit. The protein is Snaclec carinactivase-1 regulatory subunit 14 kDa chain of Echis carinatus (Saw-scaled viper).